A 72-amino-acid chain; its full sequence is Translation initiation factor IF-1 (72 aa).

The region spanning 1-72 (MSKSDYIELE…TKGRITFRHK (72 aa)) is the S1-like domain.

This sequence belongs to the IF-1 family. As to quaternary structure, component of the 30S ribosomal translation pre-initiation complex which assembles on the 30S ribosome in the order IF-2 and IF-3, IF-1 and N-formylmethionyl-tRNA(fMet); mRNA recruitment can occur at any time during PIC assembly.

Its subcellular location is the cytoplasm. In terms of biological role, one of the essential components for the initiation of protein synthesis. Stabilizes the binding of IF-2 and IF-3 on the 30S subunit to which N-formylmethionyl-tRNA(fMet) subsequently binds. Helps modulate mRNA selection, yielding the 30S pre-initiation complex (PIC). Upon addition of the 50S ribosomal subunit IF-1, IF-2 and IF-3 are released leaving the mature 70S translation initiation complex. In Vesicomyosocius okutanii subsp. Calyptogena okutanii (strain HA), this protein is Translation initiation factor IF-1.